A 255-amino-acid polypeptide reads, in one-letter code: Pyrroloquinoline-quinone synthase (255 aa).

It belongs to the PqqC family.

It catalyses the reaction 6-(2-amino-2-carboxyethyl)-7,8-dioxo-1,2,3,4,7,8-hexahydroquinoline-2,4-dicarboxylate + 3 O2 = pyrroloquinoline quinone + 2 H2O2 + 2 H2O + H(+). It participates in cofactor biosynthesis; pyrroloquinoline quinone biosynthesis. Ring cyclization and eight-electron oxidation of 3a-(2-amino-2-carboxyethyl)-4,5-dioxo-4,5,6,7,8,9-hexahydroquinoline-7,9-dicarboxylic-acid to PQQ. The sequence is that of Pyrroloquinoline-quinone synthase from Cereibacter sphaeroides (strain KD131 / KCTC 12085) (Rhodobacter sphaeroides).